Here is a 122-residue protein sequence, read N- to C-terminus: uncharacterized protein (122 aa).

The first 33 residues, 1–33 (MASTVAGLSMSAESLRLPLLIGVSSGMLSVSDA), serve as a signal peptide directing secretion.

This is an uncharacterized protein from Saccharomyces cerevisiae (strain ATCC 204508 / S288c) (Baker's yeast).